Consider the following 379-residue polypeptide: Cytochrome b (379 aa).

4 consecutive transmembrane segments (helical) span residues 33 to 53 (FGSL…FLAM), 77 to 98 (WTIR…FIHV), 113 to 133 (WNVG…GYVL), and 178 to 198 (FFAL…IHLL). 2 residues coordinate heme b: histidine 83 and histidine 97. Residues histidine 182 and histidine 196 each contribute to the heme b site. Histidine 201 lines the a ubiquinone pocket. The next 4 helical transmembrane spans lie at 226–246 (TKDF…ALFY), 288–308 (LGGV…PFLQ), 320–340 (LSQF…WIGG), and 347–367 (FINI…FIMP).

The protein belongs to the cytochrome b family. In terms of assembly, the cytochrome bc1 complex contains 11 subunits: 3 respiratory subunits (MT-CYB, CYC1 and UQCRFS1), 2 core proteins (UQCRC1 and UQCRC2) and 6 low-molecular weight proteins (UQCRH/QCR6, UQCRB/QCR7, UQCRQ/QCR8, UQCR10/QCR9, UQCR11/QCR10 and a cleavage product of UQCRFS1). This cytochrome bc1 complex then forms a dimer. The cofactor is heme b.

The protein resides in the mitochondrion inner membrane. In terms of biological role, component of the ubiquinol-cytochrome c reductase complex (complex III or cytochrome b-c1 complex) that is part of the mitochondrial respiratory chain. The b-c1 complex mediates electron transfer from ubiquinol to cytochrome c. Contributes to the generation of a proton gradient across the mitochondrial membrane that is then used for ATP synthesis. This Lepilemur sahamalazensis (Sahamalaza sportive lemur) protein is Cytochrome b (MT-CYB).